The sequence spans 1177 residues: DNA-directed RNA polymerase subunit beta (1177 aa).

Residues 1147 to 1161 (DDTEIEMRDTEDDDD) are compositionally biased toward acidic residues. Residues 1147 to 1177 (DDTEIEMRDTEDDDDHQSADKLNVEVETTKE) form a disordered region. The segment covering 1162-1177 (HQSADKLNVEVETTKE) has biased composition (basic and acidic residues).

It belongs to the RNA polymerase beta chain family. The RNAP catalytic core consists of 2 alpha, 1 beta, 1 beta' and 1 omega subunit. When a sigma factor is associated with the core the holoenzyme is formed, which can initiate transcription.

The catalysed reaction is RNA(n) + a ribonucleoside 5'-triphosphate = RNA(n+1) + diphosphate. DNA-dependent RNA polymerase catalyzes the transcription of DNA into RNA using the four ribonucleoside triphosphates as substrates. This chain is DNA-directed RNA polymerase subunit beta, found in Bacillus thuringiensis (strain Al Hakam).